A 475-amino-acid polypeptide reads, in one-letter code: uncharacterized protein (475 aa).

Residues His7–Tyr28 traverse the membrane as a helical segment. Residues Asn73, Asn83, and Asn195 are each glycosylated (N-linked (GlcNAc...) asparagine; by host). Positions Glu183 to Leu233 form a coiled coil. Residues Ser295 to Asn305 show a composition bias toward polar residues. Residues Ser295–Val324 form a disordered region. N-linked (GlcNAc...) asparagine; by host glycosylation is found at Asn450 and Asn460.

This sequence belongs to the asfivirus B475L family.

The protein localises to the host membrane. This is an uncharacterized protein from Ornithodoros (relapsing fever ticks).